The sequence spans 283 residues: 2-dehydro-3-deoxyphosphooctonate aldolase (283 aa).

Belongs to the KdsA family.

It is found in the cytoplasm. The enzyme catalyses D-arabinose 5-phosphate + phosphoenolpyruvate + H2O = 3-deoxy-alpha-D-manno-2-octulosonate-8-phosphate + phosphate. It functions in the pathway carbohydrate biosynthesis; 3-deoxy-D-manno-octulosonate biosynthesis; 3-deoxy-D-manno-octulosonate from D-ribulose 5-phosphate: step 2/3. The protein operates within bacterial outer membrane biogenesis; lipopolysaccharide biosynthesis. This is 2-dehydro-3-deoxyphosphooctonate aldolase from Laribacter hongkongensis (strain HLHK9).